The primary structure comprises 144 residues: Glycine-rich protein HC1 (144 aa).

A helical membrane pass occupies residues 5–25; the sequence is IFLLLGLSIAFAILISSEVAA. Repeat copies occupy residues 37–42, 43–48, 50–55, 56–61, 63–68, 69–74, 76–81, 82–87, 89–94, 102–107, and 108–113. The tract at residues 37–113 is 11 X 6 AA tandem repeats of G-Y-[NH]-N-G -G; that stretch reads GYNNGGGYHN…NNGGGYHGGG (77 aa).

The protein belongs to the GRP family.

Its subcellular location is the membrane. In Oxybasis rubra (Red goosefoot), this protein is Glycine-rich protein HC1.